We begin with the raw amino-acid sequence, 404 residues long: Cysteine desulfurase IscS (404 aa).

Pyridoxal 5'-phosphate is bound by residues 75 to 76 (AT), N155, Q183, and 203 to 205 (SAH). K206 carries the post-translational modification N6-(pyridoxal phosphate)lysine. Residue T243 participates in pyridoxal 5'-phosphate binding. The Cysteine persulfide intermediate role is filled by C328. Residue C328 coordinates [2Fe-2S] cluster.

Belongs to the class-V pyridoxal-phosphate-dependent aminotransferase family. NifS/IscS subfamily. Homodimer. Forms a heterotetramer with IscU, interacts with other sulfur acceptors. The cofactor is pyridoxal 5'-phosphate.

The protein resides in the cytoplasm. The enzyme catalyses (sulfur carrier)-H + L-cysteine = (sulfur carrier)-SH + L-alanine. Its pathway is cofactor biosynthesis; iron-sulfur cluster biosynthesis. Its function is as follows. Master enzyme that delivers sulfur to a number of partners involved in Fe-S cluster assembly, tRNA modification or cofactor biosynthesis. Catalyzes the removal of elemental sulfur atoms from cysteine to produce alanine. Functions as a sulfur delivery protein for Fe-S cluster synthesis onto IscU, an Fe-S scaffold assembly protein, as well as other S acceptor proteins. In Pseudomonas entomophila (strain L48), this protein is Cysteine desulfurase IscS.